The sequence spans 454 residues: Transmembrane protease serine 3 (454 aa).

The Cytoplasmic portion of the chain corresponds to 1–48 (MGENDPPAVEAPFSFRSLFGLDDLKISPVAPDADAVAAQILSLLPLKF). Residues 49–69 (FPIIVIGIIALILALAIGLGI) traverse the membrane as a helical; Signal-anchor for type II membrane protein segment. Residues 70-454 (HFDCSGKYRC…HEQMERDLKT (385 aa)) lie on the Extracellular side of the membrane. Positions 72–108 (DCSGKYRCRSSFKCIELIARCDGVSDCKDGEDEYRCV) constitute an LDL-receptor class A domain. Cystine bridges form between C73–C85, C79–C98, C92–C107, C129–C194, C142–C204, C207–C324, C242–C258, C338–C407, C370–C386, and C397–C425. The SRCR domain occupies 109–205 (RVGGQNAVLQ…SGHVVTLQCT (97 aa)). The Peptidase S1 domain maps to 217–449 (IVGGNMSLLS…FLDWIHEQME (233 aa)). The N-linked (GlcNAc...) asparagine glycan is linked to N221. Residues H257 and D304 each act as charge relay system in the active site. S401 acts as the Charge relay system in catalysis.

It belongs to the peptidase S1 family. Undergoes autoproteolytic activation. Expressed in many tissues including fetal cochlea. Isoform T is found at increased levels in some carcinomas.

It localises to the endoplasmic reticulum membrane. Probable serine protease that plays a role in hearing. Acts as a permissive factor for cochlear hair cell survival and activation at the onset of hearing and is required for saccular hair cell survival. Activates ENaC (in vitro). In Homo sapiens (Human), this protein is Transmembrane protease serine 3 (TMPRSS3).